We begin with the raw amino-acid sequence, 887 residues long: Alanine--tRNA ligase (887 aa).

4 residues coordinate Zn(2+): His565, His569, Cys674, and His678.

This sequence belongs to the class-II aminoacyl-tRNA synthetase family. The cofactor is Zn(2+).

It is found in the cytoplasm. The enzyme catalyses tRNA(Ala) + L-alanine + ATP = L-alanyl-tRNA(Ala) + AMP + diphosphate. Catalyzes the attachment of alanine to tRNA(Ala) in a two-step reaction: alanine is first activated by ATP to form Ala-AMP and then transferred to the acceptor end of tRNA(Ala). Also edits incorrectly charged Ser-tRNA(Ala) and Gly-tRNA(Ala) via its editing domain. The polypeptide is Alanine--tRNA ligase (Erythrobacter litoralis (strain HTCC2594)).